Consider the following 600-residue polypeptide: Elongation factor 4 (600 aa).

Positions 6–188 (KLIRNFSIIA…AVVERIPAPK (183 aa)) constitute a tr-type G domain. GTP contacts are provided by residues 18–23 (DHGKST) and 135–138 (NKID).

This sequence belongs to the TRAFAC class translation factor GTPase superfamily. Classic translation factor GTPase family. LepA subfamily.

The protein resides in the cell inner membrane. The catalysed reaction is GTP + H2O = GDP + phosphate + H(+). Required for accurate and efficient protein synthesis under certain stress conditions. May act as a fidelity factor of the translation reaction, by catalyzing a one-codon backward translocation of tRNAs on improperly translocated ribosomes. Back-translocation proceeds from a post-translocation (POST) complex to a pre-translocation (PRE) complex, thus giving elongation factor G a second chance to translocate the tRNAs correctly. Binds to ribosomes in a GTP-dependent manner. The polypeptide is Elongation factor 4 (Sorangium cellulosum (strain So ce56) (Polyangium cellulosum (strain So ce56))).